The primary structure comprises 304 residues: Thiosulfate sulfurtransferase TUM1 (304 aa).

Rhodanese domains follow at residues Lys-20–Ser-137 and Leu-177–Ile-299. A compositionally biased stretch (basic and acidic residues) spans Arg-191 to Ser-201. The disordered stretch occupies residues Arg-191 to Pro-222. A Phosphoserine modification is found at Ser-201. The active-site Cysteine persulfide intermediate is Cys-259. Residue Ser-264 is modified to Phosphoserine.

The protein resides in the mitochondrion. It is found in the cytoplasm. The catalysed reaction is thiosulfate + hydrogen cyanide = thiocyanate + sulfite + 2 H(+). In terms of biological role, sulfur transferase that accepts persulfite from NFS1 and transfers it to UBA4 in the pathway for 2-thiolation of the wobble uridine base of tRNAs. Stimulates sulfur transfer by NFS1. Involved in metabolism of sterol esters in a tRNA thiolation pathway-independent manner. This Saccharomyces cerevisiae (strain ATCC 204508 / S288c) (Baker's yeast) protein is Thiosulfate sulfurtransferase TUM1.